The primary structure comprises 167 residues: Photosystem I assembly protein Ycf3 (167 aa).

TPR repeat units lie at residues 35–68 (AFTY…EIDP), 72–105 (SYIL…NPSL), and 120–153 (GEQA…APGN).

This sequence belongs to the Ycf3 family.

It localises to the plastid. Its subcellular location is the chloroplast thylakoid membrane. In terms of biological role, essential for the assembly of the photosystem I (PSI) complex. May act as a chaperone-like factor to guide the assembly of the PSI subunits. This chain is Photosystem I assembly protein Ycf3, found in Chara vulgaris (Common stonewort).